The primary structure comprises 86 residues: Mitochondrial import inner membrane translocase subunit Tim10 (86 aa).

The Twin CX3C motif signature appears at 29–54 (CQAKCIATAFKESELTKGEAVCLDRC). 2 disulfide bridges follow: cysteine 29–cysteine 54 and cysteine 33–cysteine 50.

Belongs to the small Tim family. Heterohexamer; composed of 3 copies of tim-9/tin-9.1 and 3 copies of tim-10/tin-10, named soluble 70 kDa complex. The complex associates with the tim-22 component of the TIM22 complex. Interacts with multi-pass transmembrane proteins in transit.

It localises to the mitochondrion inner membrane. Functionally, mitochondrial intermembrane chaperone that participates in the import and insertion of multi-pass transmembrane proteins into the mitochondrial inner membrane. May also be required for the transfer of beta-barrel precursors from the TOM complex to the sorting and assembly machinery (SAM complex) of the outer membrane. Acts as a chaperone-like protein that protects the hydrophobic precursors from aggregation and guide them through the mitochondrial intermembrane space. This Caenorhabditis briggsae protein is Mitochondrial import inner membrane translocase subunit Tim10 (tin-10).